The following is a 418-amino-acid chain: Dihydrofolate synthase/folylpolyglutamate synthase (418 aa).

Residue 53 to 56 participates in ATP binding; the sequence is GKGT. Ser77 contributes to the Mg(2+) binding site. 116 to 119 contributes to the 7,8-dihydropteroate binding site; it reads TYFE. Mg(2+) is bound at residue Glu140. 147–149 is a 7,8-dihydropteroate binding site; the sequence is LDA. Position 167 (His167) interacts with Mg(2+). Residues Asn252, Arg284, and Asp297 each contribute to the ATP site.

The protein belongs to the folylpolyglutamate synthase family. Monomer. Mg(2+) serves as cofactor.

It carries out the reaction 7,8-dihydropteroate + L-glutamate + ATP = 7,8-dihydrofolate + ADP + phosphate + H(+). The enzyme catalyses (6S)-5,6,7,8-tetrahydrofolyl-(gamma-L-Glu)(n) + L-glutamate + ATP = (6S)-5,6,7,8-tetrahydrofolyl-(gamma-L-Glu)(n+1) + ADP + phosphate + H(+). The catalysed reaction is 10-formyltetrahydrofolyl-(gamma-L-Glu)(n) + L-glutamate + ATP = 10-formyltetrahydrofolyl-(gamma-L-Glu)(n+1) + ADP + phosphate + H(+). It catalyses the reaction (6R)-5,10-methylenetetrahydrofolyl-(gamma-L-Glu)(n) + L-glutamate + ATP = (6R)-5,10-methylenetetrahydrofolyl-(gamma-L-Glu)(n+1) + ADP + phosphate + H(+). Its pathway is cofactor biosynthesis; tetrahydrofolate biosynthesis; 7,8-dihydrofolate from 2-amino-4-hydroxy-6-hydroxymethyl-7,8-dihydropteridine diphosphate and 4-aminobenzoate: step 2/2. It participates in cofactor biosynthesis; tetrahydrofolylpolyglutamate biosynthesis. Functionally, functions in two distinct reactions of the de novo folate biosynthetic pathway. Catalyzes the addition of a glutamate residue to dihydropteroate (7,8-dihydropteroate or H2Pte) to form dihydrofolate (7,8-dihydrofolate monoglutamate or H2Pte-Glu). Also catalyzes successive additions of L-glutamate to tetrahydrofolate or 10-formyltetrahydrofolate or 5,10-methylenetetrahydrofolate, leading to folylpolyglutamate derivatives. This is Dihydrofolate synthase/folylpolyglutamate synthase (folC) from Buchnera aphidicola subsp. Schizaphis graminum (strain Sg).